Consider the following 798-residue polypeptide: Palmitoyl thioesterase CPT1C (798 aa).

The Cytoplasmic portion of the chain corresponds to 1 to 52 (MAEAHQASSLLSSLSSDGAEVELSSPVWQEIYLCALRSWKRHLWRVWNDFLA). Residues 53–75 (GVVPATPLSWLFLFSTIQLACLL) form a helical membrane-spanning segment. Residues 76–103 (QLDPSLGLMEKIKELLPDWGGQHHQLQG) are Lumenal-facing. Residues 104 to 126 (FLSAAVFASCLWGALIFTLHVAL) form a helical membrane-spanning segment. Over 127–798 (RLLLSHHGWL…PNTPTSSTNL (672 aa)) the chain is Cytoplasmic. The active-site Proton acceptor is the His469. 551-563 (GKSFIKCCHVSSD) serves as a coordination point for CoA. Residues Tyr585, Ser587, and Thr598 each contribute to the (R)-carnitine site. Positions 759-798 (LFRVGQHFKRQFRGENSDYRYNFLSCKTVDPNTPTSSTNL) are required for interaction with GRIA1.

It belongs to the carnitine/choline acetyltransferase family. In terms of assembly, peripherally associated with AMPAR complex. AMPAR complex consists of an inner core made of 4 pore-forming GluA/GRIA proteins (GRIA1, GRIA2, GRIA3 and GRIA4) and 4 major auxiliary subunits arranged in a twofold symmetry. One of the two pairs of distinct binding sites is occupied either by CNIH2, CNIH3 or CACNG2, CACNG3. The other harbors CACNG2, CACNG3, CACNG4, CACNG8 or GSG1L. This inner core of AMPAR complex is complemented by outer core constituents binding directly to the GluA/GRIA proteins at sites distinct from the interaction sites of the inner core constituents. Outer core constituents include at least PRRT1, PRRT2, CKAMP44/SHISA9, FRRS1L and NRN1. The proteins of the inner and outer core serve as a platform for other, more peripherally associated AMPAR constituents, including CPT1C. Alone or in combination, these auxiliary subunits control the gating and pharmacology of the AMPAR complex and profoundly impact their biogenesis and protein processing. Interacts with SACM1L; the interaction regulates SACM1L phosphatidylinositol-3-phosphatase activity and translocation to endoplasmic reticulum/trans Golgi network in a malonyl-CoA dependent manner. Interacts with ATL1. In terms of tissue distribution, predominantly expressed in brain (at protein level) and testis, highly expressed in the hippocampus, amygdala and cerebellum. Expressed in neurons but not astrocytes. Expressed in the ventral horn from spinal cords.

It is found in the synapse. Its subcellular location is the cell projection. It localises to the axon. The protein localises to the dendrite. The protein resides in the dendritic spine. It is found in the endoplasmic reticulum membrane. It carries out the reaction S-hexadecanoyl-L-cysteinyl-[protein] + H2O = L-cysteinyl-[protein] + hexadecanoate + H(+). In terms of biological role, palmitoyl thioesterase specifically expressed in the endoplasmic reticulum of neurons. Modulates the trafficking of the glutamate receptor, AMPAR, to plasma membrane through depalmitoylation of GRIA1. Also regulates AMPR trafficking through the regulation of SACM1L phosphatidylinositol-3-phosphatase activity by interaction in a malonyl-CoA dependent manner. Binds malonyl-CoA and couples malonyl-CoA to ceramide levels, necessary for proper spine maturation and contributing to systemic energy homeostasis and appetite control. Binds to palmitoyl-CoA, but does not have carnitine palmitoyltransferase 1 catalytic activity or at very low levels. This is Palmitoyl thioesterase CPT1C (Cpt1c) from Mus musculus (Mouse).